Here is a 215-residue protein sequence, read N- to C-terminus: 3-demethoxyubiquinol 3-hydroxylase (215 aa).

Fe cation is bound by residues Glu64, Glu94, His97, Glu146, Glu178, and His181.

Belongs to the COQ7 family. Fe cation is required as a cofactor.

The protein localises to the cell membrane. It catalyses the reaction a 5-methoxy-2-methyl-3-(all-trans-polyprenyl)benzene-1,4-diol + AH2 + O2 = a 3-demethylubiquinol + A + H2O. Its pathway is cofactor biosynthesis; ubiquinone biosynthesis. Catalyzes the hydroxylation of 2-nonaprenyl-3-methyl-6-methoxy-1,4-benzoquinol during ubiquinone biosynthesis. The chain is 3-demethoxyubiquinol 3-hydroxylase from Coxiella burnetii (strain RSA 331 / Henzerling II).